A 220-amino-acid polypeptide reads, in one-letter code: Ribose-5-phosphate isomerase A (220 aa).

Substrate contacts are provided by residues 25–28 (TGST), 80–83 (DGAD), and 93–96 (KGGG). The active-site Proton acceptor is the Glu-102. Lys-120 is a substrate binding site.

Belongs to the ribose 5-phosphate isomerase family. As to quaternary structure, homodimer.

The enzyme catalyses aldehydo-D-ribose 5-phosphate = D-ribulose 5-phosphate. It participates in carbohydrate degradation; pentose phosphate pathway; D-ribose 5-phosphate from D-ribulose 5-phosphate (non-oxidative stage): step 1/1. Catalyzes the reversible conversion of ribose-5-phosphate to ribulose 5-phosphate. The chain is Ribose-5-phosphate isomerase A from Bacillus cereus (strain ATCC 10987 / NRS 248).